We begin with the raw amino-acid sequence, 58 residues long: Small ribosomal subunit protein bS21 (58 aa).

Basic and acidic residues predominate over residues 32–42; it reads VRKREHYEKPS. Residues 32–58 are disordered; it reads VRKREHYEKPSVKKKKKSEAARKRKFK. Positions 43 to 58 are enriched in basic residues; sequence VKKKKKSEAARKRKFK.

It belongs to the bacterial ribosomal protein bS21 family.

The sequence is that of Small ribosomal subunit protein bS21 from Clostridium botulinum (strain Okra / Type B1).